The sequence spans 486 residues: Malonate-semialdehyde dehydrogenase (486 aa).

NAD(+) is bound by residues Phe-154, Lys-178, Glu-181, Arg-182, and Ser-231. Residue Cys-286 is the Nucleophile of the active site. Glu-386 provides a ligand contact to NAD(+).

The protein belongs to the aldehyde dehydrogenase family. IolA subfamily. As to quaternary structure, homotetramer.

It catalyses the reaction 3-oxopropanoate + NAD(+) + CoA + H2O = hydrogencarbonate + acetyl-CoA + NADH + H(+). The catalysed reaction is 2-methyl-3-oxopropanoate + NAD(+) + CoA + H2O = propanoyl-CoA + hydrogencarbonate + NADH + H(+). It functions in the pathway polyol metabolism; myo-inositol degradation into acetyl-CoA; acetyl-CoA from myo-inositol: step 7/7. Its function is as follows. Catalyzes the oxidation of malonate semialdehyde (MSA) and methylmalonate semialdehyde (MMSA) into acetyl-CoA and propanoyl-CoA, respectively. Is involved in a myo-inositol catabolic pathway. Bicarbonate, and not CO2, is the end-product of the enzymatic reaction. The polypeptide is Malonate-semialdehyde dehydrogenase (Bacillus cereus (strain AH187)).